The sequence spans 275 residues: Adaptin ear-binding coat-associated protein 1 (275 aa).

The tract at residues 166-190 (ITTKKGGTSKPKTAGTGGLSLLPPP) is disordered. A compositionally biased stretch (low complexity) spans 167–179 (TTKKGGTSKPKTA). At T211 the chain carries Phosphothreonine. Residues 215 to 275 (IPKSNHGGSD…APQPSNWVQF (61 aa)) are disordered. 2 consecutive short sequence motifs (WXXF motif) follow at residues 252 to 255 (WGDF) and 272 to 275 (WVQF). Residues 256 to 275 (STASSSVPNQAPQPSNWVQF) are compositionally biased toward polar residues.

This sequence belongs to the NECAP family. In terms of assembly, interacts with AP1G1 and AP2A1 components of the adapter protein complexes AP-1 and AP-2. Interacts with the GAE domain proteins GGA1, GGA2 and GGA3.

The protein localises to the cytoplasmic vesicle. Its subcellular location is the clathrin-coated vesicle membrane. It is found in the cell membrane. Its function is as follows. Involved in endocytosis. This Bos taurus (Bovine) protein is Adaptin ear-binding coat-associated protein 1 (NECAP1).